The following is a 519-amino-acid chain: MAIIPWKAIDESLSLRWKIIVTLLAIYTLRIIGTRITTTRARRKFREQHGCAPVTCQLPLKDPFFGIDFILKLMRVFKEKRLLETFANDFYKTVGITFLVERGSQQTIFTIDPENIKTVLALKFKDYGLAFRAPLFNPVTGGGMFVSDGEEWAHSRALMRPTFARDQVADLALTNRHVTDLVSKIPINTTFNLQELLFDFTMDTGTEFLFGESTDTLCNPTKASQEFTKAFDFTLKDVAYQARLGPLRRFQGSRSKALEVYQVCRSYVERYVDQAMALRTSTLTGEVTRENEPQNRHDSLLRQLARSGVSKEKIRAELLSVLIAARDTTSNLLGNLFFVLARRPDIWTKIRDEVKHLDTNEPTYEQLRHLTYAKYCINESLRLHPPVPSNGRMAYRDTILPHGGGPNGDHPIHVPKGSMVNYTVYAMHRRKDLYGQDAEEFRPERWESLRPSWFFLPFNGGPRICLGQQYAITESLLVIMRFAQEFTSIQSMDAKPWTEEIALGCGNANGVYVSFQKLK.

A helical membrane pass occupies residues 12-34 (SLSLRWKIIVTLLAIYTLRIIGT). Residue C465 participates in heme binding.

This sequence belongs to the cytochrome P450 family. Heme serves as cofactor.

The protein localises to the membrane. It participates in secondary metabolite biosynthesis. In terms of biological role, cytochrome P450 monooxygenase; part of the gene cluster that mediates the biosynthesis of the gamma-pyrones fusapyrone (FPY) and deoxyfusapyrone (dFPY). FPY is an undecaketide and thus likely synthesized by the polyketide synthase FPY1 from acetyl-CoA functioning as starter unit and the addition of 10 malonyl-CoA extender units by successive Claisen-condensations. Next to this, FPY shares some rare features: C-glycosylated 4-deoxyglucose at C-3, a gem-dimethyl group at C-13, and an alpha-beta to beta-gamma double bond shift at C-20. During FPY biosynthesis mono-C-methyl groups are transferred to the tetra-, penta-, hexa- and heptaketide, while two C-methyl groups are transferred to the nonaketide, suggesting that the CMet domain is programmed to selectively catalyze two successive C-alpha-methylation reactions of the nonaketide, while other alpha-carbons are non- or mono-methylated only. While the origin of the 4'-deoxyglucose moiety remains opaque, its transfer to C-3 is most likely mediated by the C-glycosyltransferase FPY2. Next to this, the hydroxyl group present at C-33 and discriminating between FPY and dFPY, is likely to be installed by the cytochrome P450 monooxygenase FPY7. No putative function can be predicted for the remaining genes FPY3-FPY6. The polypeptide is Cytochrome P450 monooxygenase FPY7 (Fusarium mangiferae (Mango malformation disease fungus)).